The primary structure comprises 706 residues: Polyribonucleotide nucleotidyltransferase (706 aa).

Residues Asp-487 and Asp-493 each coordinate Mg(2+). A KH domain is found at 554–613; sequence PRIHTMKISSDKIKDVIGKGGAVIRALCEETGTTIEIEDDGTIKIAATEGAAAKEAIRRI. One can recognise an S1 motif domain in the interval 623–691; that stretch reads GRIYQGKVAR…RQGRVRLSMK (69 aa).

Belongs to the polyribonucleotide nucleotidyltransferase family. As to quaternary structure, component of the RNA degradosome, which is a multiprotein complex involved in RNA processing and mRNA degradation. It depends on Mg(2+) as a cofactor.

The protein resides in the cytoplasm. It catalyses the reaction RNA(n+1) + phosphate = RNA(n) + a ribonucleoside 5'-diphosphate. Functionally, involved in mRNA degradation. Catalyzes the phosphorolysis of single-stranded polyribonucleotides processively in the 3'- to 5'-direction. The polypeptide is Polyribonucleotide nucleotidyltransferase (Vibrio atlanticus (strain LGP32) (Vibrio splendidus (strain Mel32))).